Here is a 217-residue protein sequence, read N- to C-terminus: Probable glutathione S-transferase (217 aa).

The GST N-terminal domain maps to 2–81; the sequence is AEVKLLGLRY…YIDEAFEGPS (80 aa). Glutathione-binding positions include Ser-12, Lys-39, Ile-53, and 65-66; that span reads ES. A GST C-terminal domain is found at 86–210; the sequence is DPYDRALARF…ELLIRYRAYI (125 aa).

The protein belongs to the GST superfamily. HSP26 family.

It carries out the reaction RX + glutathione = an S-substituted glutathione + a halide anion + H(+). The protein is Probable glutathione S-transferase (PRP1) of Solanum tuberosum (Potato).